The primary structure comprises 198 residues: Nucleoid occlusion factor SlmA (198 aa).

Residues 10–70 enclose the HTH tetR-type domain; that stretch reads NRREEILQSL…SLIEFIEDSL (61 aa). A DNA-binding region (H-T-H motif) is located at residues 33-52; it reads TTAKLAASVGVSEAALYRHF. The stretch at 117 to 144 forms a coiled coil; it reads EQDRLQGRINQLFERIEAQLRQVLREKR.

This sequence belongs to the nucleoid occlusion factor SlmA family. In terms of assembly, homodimer. Interacts with FtsZ.

It localises to the cytoplasm. The protein localises to the nucleoid. Its function is as follows. Required for nucleoid occlusion (NO) phenomenon, which prevents Z-ring formation and cell division over the nucleoid. Acts as a DNA-associated cell division inhibitor that binds simultaneously chromosomal DNA and FtsZ, and disrupts the assembly of FtsZ polymers. SlmA-DNA-binding sequences (SBS) are dispersed on non-Ter regions of the chromosome, preventing FtsZ polymerization at these regions. This chain is Nucleoid occlusion factor SlmA, found in Salmonella dublin (strain CT_02021853).